We begin with the raw amino-acid sequence, 618 residues long: UvrABC system protein C (618 aa).

Residues 13–92 enclose the GIY-YIG domain; the sequence is DKPGVYLMKN…IKKYRPKYNI (80 aa). The region spanning 204 to 239 is the UVR domain; the sequence is LDIVENFKLNMERAAENLEFEKAAMLRDKINIIEKI.

Belongs to the UvrC family. Interacts with UvrB in an incision complex.

Its subcellular location is the cytoplasm. The UvrABC repair system catalyzes the recognition and processing of DNA lesions. UvrC both incises the 5' and 3' sides of the lesion. The N-terminal half is responsible for the 3' incision and the C-terminal half is responsible for the 5' incision. In Clostridium botulinum (strain Langeland / NCTC 10281 / Type F), this protein is UvrABC system protein C.